The chain runs to 326 residues: MAASNGEKSLIVSFGEMLIDFVPTVSGVSLADAPGFIKAPGGAPANVAIAISRLGGRAAFVGKLGDDEFGHMLAGILKQNGVSAEGINFDTGARTALAFVTLRSDGEREFMFYRNPSADMLLRPDELNLDVIRSAKVFHYGSISLIVEPCRSAHLKAMEVAKEAGALLSYDPNLRLPLWPSKEEAQKQILSIWDKAEVIKVSDEELMFLTGSDKVDDETALSLWHSNLKLLLVTLGEKGCRYYTKSFRGSVDPFHVDAVDTTGAGDSFVGALLCKIVDDRAVLEDEARLREVLRLANACGAITTTKKGAIPALPTESEVQSLLKGN.

This sequence belongs to the carbohydrate kinase PfkB family.

The catalysed reaction is D-fructose + ATP = D-fructose 6-phosphate + ADP + H(+). It participates in glycan biosynthesis; starch biosynthesis. Functionally, may play an important role in maintaining the flux of carbon towards starch formation. The sequence is that of Probable fructokinase-4 from Arabidopsis thaliana (Mouse-ear cress).